The chain runs to 194 residues: Probable GTP-binding protein EngB (194 aa).

The 175-residue stretch at 19-193 (DCIQICFWGR…VLFIEENIFK (175 aa)) folds into the EngB-type G domain. GTP is bound by residues 27–34 (GRSNVGKS), 53–57 (GRTQF), 70–73 (DLPG), 137–140 (TKID), and 172–174 (VSS). Positions 34 and 55 each coordinate Mg(2+).

It belongs to the TRAFAC class TrmE-Era-EngA-EngB-Septin-like GTPase superfamily. EngB GTPase family. It depends on Mg(2+) as a cofactor.

Functionally, necessary for normal cell division and for the maintenance of normal septation. This is Probable GTP-binding protein EngB from Mycoplasmopsis agalactiae (strain NCTC 10123 / CIP 59.7 / PG2) (Mycoplasma agalactiae).